Here is a 65-residue protein sequence, read N- to C-terminus: Large ribosomal subunit protein bL28 (65 aa).

It belongs to the bacterial ribosomal protein bL28 family.

The polypeptide is Large ribosomal subunit protein bL28 (Bifidobacterium animalis subsp. lactis (strain AD011)).